Reading from the N-terminus, the 199-residue chain is 3-isopropylmalate dehydratase small subunit (199 aa).

It belongs to the LeuD family. LeuD type 1 subfamily. In terms of assembly, heterodimer of LeuC and LeuD.

It catalyses the reaction (2R,3S)-3-isopropylmalate = (2S)-2-isopropylmalate. It functions in the pathway amino-acid biosynthesis; L-leucine biosynthesis; L-leucine from 3-methyl-2-oxobutanoate: step 2/4. Its function is as follows. Catalyzes the isomerization between 2-isopropylmalate and 3-isopropylmalate, via the formation of 2-isopropylmaleate. The protein is 3-isopropylmalate dehydratase small subunit of Kocuria rhizophila (strain ATCC 9341 / DSM 348 / NBRC 103217 / DC2201).